Here is a 162-residue protein sequence, read N- to C-terminus: Large ribosomal subunit protein uL30 (162 aa).

The protein belongs to the universal ribosomal protein uL30 family. Part of the 50S ribosomal subunit.

The sequence is that of Large ribosomal subunit protein uL30 from Desulfurococcus amylolyticus (strain DSM 18924 / JCM 16383 / VKM B-2413 / 1221n) (Desulfurococcus kamchatkensis).